The primary structure comprises 383 residues: Sulfate adenylyltransferase (383 aa).

It belongs to the sulfate adenylyltransferase family.

It carries out the reaction sulfate + ATP + H(+) = adenosine 5'-phosphosulfate + diphosphate. It functions in the pathway sulfur metabolism; hydrogen sulfide biosynthesis; sulfite from sulfate: step 1/3. The protein is Sulfate adenylyltransferase (sat) of Aeropyrum pernix (strain ATCC 700893 / DSM 11879 / JCM 9820 / NBRC 100138 / K1).